Reading from the N-terminus, the 247-residue chain is Neurotrophic factor BDNF precursor form (247 aa).

Residues 1-18 (MTILFLTMVISYFGCMKA) form the signal peptide. Residues 19-128 (APMKEASVRG…AANMSMRVRR (110 aa)) constitute a propeptide that is removed on maturation. Asparagine 121 is a glycosylation site (N-linked (GlcNAc...) asparagine). 3 cysteine pairs are disulfide-bonded: cysteine 141–cysteine 208, cysteine 186–cysteine 237, and cysteine 196–cysteine 239.

It belongs to the NGF-beta family. In terms of assembly, monomers and homodimers. Binds to NTRK2/TRKB. Can form heterodimers with other neurotrophin family members, such as NTF3 and NTF4 (in vitro), but the physiological relevance of this is not clear. BDNF precursor form: interacts with the heterodimer formed by NGFR and SORCS2. Mature BDNF has much lower affinity for the heterodimer formed by NGFR and SORCS2. In terms of processing, N-glycosylated and glycosulfated, contrary to mature BDNF. Mature BDNF is produced by proteolytic removal of the propeptide, catalyzed by a FURIN family member. In addition, the precursor form is proteolytically cleaved within the propeptide, but this is not an obligatory intermediate for the production of mature BDNF. Can be converted into mature BDNF by plasmin (PLG).

Its subcellular location is the secreted. Important signaling molecule that activates signaling cascades downstream of NTRK2. During development, promotes the survival and differentiation of selected neuronal populations of the peripheral and central nervous systems. Participates in axonal growth, pathfinding and in the modulation of dendritic growth and morphology. Major regulator of synaptic transmission and plasticity at adult synapses in many regions of the CNS. The versatility of BDNF is emphasized by its contribution to a range of adaptive neuronal responses including long-term potentiation (LTP), long-term depression (LTD), certain forms of short-term synaptic plasticity, as well as homeostatic regulation of intrinsic neuronal excitability. This is Neurotrophic factor BDNF precursor form (BDNF) from Canis lupus familiaris (Dog).